The primary structure comprises 251 residues: Protein unc-119 homolog B (251 aa).

Residues Met-1–Ser-13 are compositionally biased toward polar residues. The tract at residues Met-1 to Ala-56 is disordered. Ser-2 carries the post-translational modification N-acetylserine. Position 24 is an N6-acetyllysine (Lys-24). Tetradecanoate is bound at residue Tyr-142.

It belongs to the PDE6D/unc-119 family. Found in a complex with ARL3, RP2 and UNC119B; RP2 induces hydrolysis of GTP ARL3 in the complex, leading to the release of UNC119B. Interacts with NPHP3 (when myristoylated). Interacts with CYS1 (when myristoylated). Interacts with MACIR; interaction only takes place when UNC119B is not liganded with myristoylated proteins.

It is found in the cell projection. It localises to the cilium. Its function is as follows. Myristoyl-binding protein that acts as a cargo adapter: specifically binds the myristoyl moiety of a subset of N-terminally myristoylated proteins and is required for their localization. Binds myristoylated NPHP3 and plays a key role in localization of NPHP3 to the primary cilium membrane. Does not bind all myristoylated proteins. Probably plays a role in trafficking proteins in photoreceptor cells. This Mus musculus (Mouse) protein is Protein unc-119 homolog B (Unc119b).